Here is a 192-residue protein sequence, read N- to C-terminus: Ribosome maturation factor RimM (192 aa).

Positions 99-186 constitute a PRC barrel domain; sequence ADEYHVSELV…RIEIAPPPGL (88 aa).

It belongs to the RimM family. As to quaternary structure, binds ribosomal protein uS19.

The protein resides in the cytoplasm. Its function is as follows. An accessory protein needed during the final step in the assembly of 30S ribosomal subunit, possibly for assembly of the head region. Essential for efficient processing of 16S rRNA. May be needed both before and after RbfA during the maturation of 16S rRNA. It has affinity for free ribosomal 30S subunits but not for 70S ribosomes. This Microcystis aeruginosa (strain NIES-843 / IAM M-2473) protein is Ribosome maturation factor RimM.